Consider the following 208-residue polypeptide: Cysteine-rich protein 2 (208 aa).

The LIM zinc-binding 1 domain occupies 5–57 (CPKCDKTVYFAEKVSSLGKDWHKFCLKCERCNKTLTPGGHAEHDGKPFCHKPC). At Lys-23 the chain carries N6-acetyllysine. A Phosphoserine modification is found at Ser-104. In terms of domain architecture, LIM zinc-binding 2 spans 126–178 (CPRCNKRVYFAEKVTSLGKDWHRPCLRCERCSKTLTPGGHAEHDGQPYCHKPC). Residues Lys-138 and Lys-144 each carry the N6-acetyllysine modification.

Interacts with TGFB1I1.

The sequence is that of Cysteine-rich protein 2 (Crip2) from Mus musculus (Mouse).